The following is a 162-amino-acid chain: Disulfide bond formation protein B (162 aa).

The Cytoplasmic segment spans residues 1-8; that stretch reads MTPLFRKA. The chain crosses the membrane as a helical span at residues 9–25; that stretch reads VWLLFAVSVCAFAGSLA. Over 26–43 the chain is Periplasmic; the sequence is AQYVLGMEPCVLCISQRL. Cysteines 35 and 38 form a disulfide. The helical transmembrane segment at 44–60 threads the bilayer; the sequence is CVLATALCTAIVLMCRP. Residues 61 to 67 lie on the Cytoplasmic side of the membrane; that stretch reads RRRAGGL. The chain crosses the membrane as a helical span at residues 68–85; the sequence is FGAVFISIPAVTGISVAA. The Periplasmic segment spans residues 86–141; it reads YQLWLQSLPPGTAPSCGAPWTFRLKGWPLFDWFEPVVRGFGNCAEPDYLLGIALPV. Residues Cys101 and Cys128 are joined by a disulfide bond. The chain crosses the membrane as a helical span at residues 142–160; that stretch reads WSVAYFLAVVLTVWWAWAR. The Cytoplasmic portion of the chain corresponds to 161–162; it reads AK.

Belongs to the DsbB family.

It localises to the cell inner membrane. Functionally, required for disulfide bond formation in some periplasmic proteins. Acts by oxidizing the DsbA protein. This Neisseria meningitidis serogroup B (strain ATCC BAA-335 / MC58) protein is Disulfide bond formation protein B.